The following is a 401-amino-acid chain: ATP-dependent RNA helicase FAL1 (401 aa).

The short motif at 27 to 55 (PTFESMSLKENLLRGIYAYGYESPSAVQS) is the Q motif element. The 171-residue stretch at 58–228 (IVQVCKGRDT…TKFMTDPVRI (171 aa)) folds into the Helicase ATP-binding domain. An ATP-binding site is contributed by 71-78 (AQSGTGKT). Residues 176–179 (DEAD) carry the DEAD box motif. Residues 239–400 (GLKQYFIAVE…EMPMNVADLI (162 aa)) enclose the Helicase C-terminal domain.

It belongs to the DEAD box helicase family. DDX48/FAL1 subfamily.

The protein resides in the nucleus. It localises to the nucleolus. The enzyme catalyses ATP + H2O = ADP + phosphate + H(+). Functionally, ATP-dependent RNA helicase involved in 40S ribosomal subunit biogenesis. Required for the processing and cleavage of 35S pre-rRNA at sites A0, A1, and A2, leading to mature 18S rRNA. The sequence is that of ATP-dependent RNA helicase FAL1 (FAL1) from Gibberella zeae (strain ATCC MYA-4620 / CBS 123657 / FGSC 9075 / NRRL 31084 / PH-1) (Wheat head blight fungus).